The following is a 443-amino-acid chain: MRGFSNEIILKRTLTLSDFTLRYHKRGITALQVIKAPSVSNVPVLLSGDNYGYFVMWDLVTKRPITHIEIEGNSHIIAFWWVETTNVLYILSKDSMLRIFELDSSTQLSIDLVRKLSQANKTDHLQWTKIYEMPINTLNFANFIIEAEVKPTKDNKSYRLVCCHTDDSETIDIYQIIEDSTFKLKRPFNNINFPRFLKQQNFLGISKDSKFGIIMRFAKLNDVIFLGYENGFVVGFKITFDEGLQRDIAELVHVSNDHYPNPILDMCVSGDELYSCSTDDFITKYKIPVNLQLETKYLRDDALLIKCPSSLRVSEPSKVHLPLKNIGHIDKVKDDYLVVSSWSGMTIVYNMRTSEVEQTFVKSKNNLVVSDSSMGDLTNGSGSNTESSSKSHNYKVGAMTCLESFDVQSDGLRLGQLRRIKALAKCNWCLIGYEDGTIKLNKI.

WD repeat units lie at residues 23–67 (YHKR…PITH), 71–110 (EGNSHIIAFWWVETTNVLYILSKDSMLRIFELDSSTQLSI), 258–295 (HYPNPILDMCVSGDELYSCSTDDFITKYKIPVNLQLET), and 318–359 (KVHL…VEQT). Residues 372–391 (SSMGDLTNGSGSNTESSSKS) form a disordered region. The segment covering 378–391 (TNGSGSNTESSSKS) has biased composition (low complexity).

The protein belongs to the WD repeat ASA1 family. As to quaternary structure, component of the ASTRA chromatin remodeling machinery complex composed of at least RVB1, RVB2, TRA1, TEL2, TTI1 and TTI2.

It is found in the nucleus. Its function is as follows. Component of the ASTRA complex involved in chromatin remodeling. This is ASTRA-associated protein 1 (ASA1) from Saccharomyces cerevisiae (strain RM11-1a) (Baker's yeast).